Here is a 232-residue protein sequence, read N- to C-terminus: Large ribosomal subunit protein uL1 (232 aa).

The protein belongs to the universal ribosomal protein uL1 family. As to quaternary structure, part of the 50S ribosomal subunit.

Functionally, binds directly to 23S rRNA. The L1 stalk is quite mobile in the ribosome, and is involved in E site tRNA release. Its function is as follows. Protein L1 is also a translational repressor protein, it controls the translation of the L11 operon by binding to its mRNA. This chain is Large ribosomal subunit protein uL1, found in Chlamydia trachomatis serovar L2b (strain UCH-1/proctitis).